Consider the following 520-residue polypeptide: AAA-ATPase At5g57480 (520 aa).

The signal sequence occupies residues 1–24 (MKEYWTSLASLLGVLAFCQSLMQS). 244–251 (GPPGTGKS) provides a ligand contact to ATP. 2 disordered regions span residues 307–340 (KKNSSNVSSQRSYYDAETRNGSGSGSGGSGEEGG) and 467–520 (NVKD…TRED). Over residues 328–340 (SGSGSGGSGEEGG) the composition is skewed to gly residues. Residues 497-512 (QNEDEDHDEEEIELED) show a composition bias toward acidic residues.

The protein belongs to the AAA ATPase family. BCS1 subfamily. Requires Mg(2+) as cofactor.

The enzyme catalyses ATP + H2O = ADP + phosphate + H(+). The chain is AAA-ATPase At5g57480 from Arabidopsis thaliana (Mouse-ear cress).